The sequence spans 567 residues: Polyadenylate-binding protein-interacting protein 7 (567 aa).

The tract at residues 1–22 (MSLTKKASEPKLSGTSIKPTTL) is disordered. The span at 13–22 (SGTSIKPTTL) shows a compositional bias: polar residues. Residues 21–31 (TLNPHAAEFVP) carry the PAM2-like motif. In terms of domain architecture, CUE spans 215 to 259 (DMEVNPVDFLASQFPGFAAESLAEVYFANGCDLQLTIEMLTQLEL). The segment at 355–387 (RNDSADSSIGSSRNSGAYKSGRGRSIYSDKLQS) is disordered. A compositionally biased stretch (polar residues) spans 359–371 (ADSSIGSSRNSGA). The 83-residue stretch at 485–567 (IDLHGLHVSE…QAGLLRVIIY (83 aa)) folds into the Smr domain.

Interacts with MPC and PAB2. Expressed in cauline leaves, stems, rosette leaves, immature siliques and primary inflorescences.

The protein is Polyadenylate-binding protein-interacting protein 7 (CID7) of Arabidopsis thaliana (Mouse-ear cress).